The sequence spans 571 residues: Cyclic di-GMP phosphodiesterase TpdA (571 aa).

Transmembrane regions (helical) follow at residues 155–175 (IAWV…YAIN), 321–341 (VYYI…FLVI), and 395–415 (TLIS…AIYA). The 228-residue stretch at 344–571 (HRSLQAFITY…HQGYFYPLHF (228 aa)) folds into the EAL domain.

It is found in the cell inner membrane. The catalysed reaction is 3',3'-c-di-GMP + H2O = 5'-phosphoguanylyl(3'-&gt;5')guanosine + H(+). In terms of biological role, cyclic di-GMP phosphodiesterase that plays an important role in modulating the global c-di-GMP pool. Its ability to alter the c-di-GMP pool has an effect on swimming motility, swarming motility and biofilm formation, multicellular behaviors that are important for the survival and dissemination of this environmental pathogen. Exhibits a dual function, namely, c-di-GMP degradation and modulation of its own expression. This is Cyclic di-GMP phosphodiesterase TpdA from Vibrio parahaemolyticus serotype O3:K6 (strain RIMD 2210633).